The chain runs to 327 residues: Putative HTH-type transcriptional regulatory protein Mbar_A2318 (327 aa).

Residues 132 to 190 (LKKARMGQSMSLGTLASMVGVSRRTISKYEEEGMDASIDVVLQLEDIFGVELAKPINIL) enclose the HTH cro/C1-type domain. A DNA-binding region (H-T-H motif) is located at residues 143–162 (LGTLASMVGVSRRTISKYEE).

The polypeptide is Putative HTH-type transcriptional regulatory protein Mbar_A2318 (Methanosarcina barkeri (strain Fusaro / DSM 804)).